A 198-amino-acid chain; its full sequence is Recombination protein RecR (198 aa).

Residues 57-72 (CSICGNLTDDDPCHIC) form a C4-type zinc finger. One can recognise a Toprim domain in the interval 80–175 (TTILVVEDAK…KVTRLARGLA (96 aa)).

Belongs to the RecR family.

Its function is as follows. May play a role in DNA repair. It seems to be involved in an RecBC-independent recombinational process of DNA repair. It may act with RecF and RecO. The protein is Recombination protein RecR of Streptococcus pyogenes serotype M5 (strain Manfredo).